A 227-amino-acid chain; its full sequence is GFP-like non-fluorescent chromoprotein (227 aa).

Positions 63 to 65 (EYG) form a cross-link, 2-iminomethyl-5-imidazolinone (Glu-Gly). Y64 carries the 2,3-didehydrotyrosine modification.

This sequence belongs to the GFP family. As to quaternary structure, homotetramer. Contains a chromophore consisting of modified amino acid residues. The chromophore is formed by autocatalytic backbone condensation between Xaa-N and Gly-(N+2), oxidation of Tyr-(N+1) to didehydrotyrosine, and formation of a double bond to the alpha-amino nitrogen of residue Xaa-N. Maturation of the chromophore requires nothing other than molecular oxygen. The precise stereochemistry of the tyrosine has not been determined.

Non-fluorescent pigment protein that is lilac in color. This Radianthus crispa (Leathery sea anemone) protein is GFP-like non-fluorescent chromoprotein.